A 770-amino-acid polypeptide reads, in one-letter code: Transducin-like enhancer protein 1 (770 aa).

The segment at 1–131 is q domain; it reads MFPQSRHPTP…IIGQQQLQAQ (131 aa). Disordered stretches follow at residues 128–157 and 176–348; these read LQAQ…GIPP and HLAI…PAID. Positions 132 to 199 are GP domain; sequence HLSHGHGPPV…HHRDREPGTS (68 aa). 2 stretches are compositionally biased toward basic and acidic residues: residues 178 to 196 and 209 to 246; these read AIKD…DREP and RGTD…KSDD. Residues 200–268 are ccN domain; that stretch reads NSLLVPDSLR…SPRASPAHSP (69 aa). A Nuclear localization signal motif is present at residues 225–228; that stretch reads KKRK. At Ser-239 the chain carries Phosphoserine. Over residues 257 to 266 the composition is skewed to low complexity; sequence PSSPRASPAH. Residues Ser-259, Ser-263, and Ser-267 each carry the phosphoserine; by CDK1 modification. Residues 267–283 are compositionally biased toward basic and acidic residues; it reads SPRENGIDKNRLLKKDA. The interval 269-450 is SP domain; it reads RENGIDKNRL…GGKPAYSFHV (182 aa). The segment covering 284 to 298 has biased composition (low complexity); that stretch reads SSSPASTASSASSTS. A Phosphoserine modification is found at Ser-286. Over residues 300–310 the composition is skewed to basic and acidic residues; that stretch reads KSKEMSLHEKA. 6 WD repeats span residues 470–501, 528–558, 572–602, 614–644, 696–726, and 737–767; these read GIPR…HVYT, NRDN…SIWD, SSAP…AVWD, GHTD…RSWD, LHES…NAWR, and KESS…TVYE.

The protein belongs to the WD repeat Groucho/TLE family. Homooligomer and heterooligomer with other family members. Binds RUNX1, RUNX3, FOXA2, KDM6A, UTY, histone H3, HESX1, ESRRG and the NF-kappa-B subunit RELA. Interacts with HES1 (via WRPW motif). Binds TCF7, LEF1, TCF7L1 and TCF7L2. Interacts with SIX3. Interacts with EFNB1. Interacts with TLE4. Interacts with FOXG1/BF-1; the interaction is inhibited by TLE6/GRG6. In terms of processing, phosphorylated, probably by CDK1. The degree of phosphorylation varies throughout the cell cycle, and is highest at the G2/M transition. Becomes hyperphosphorylated in response to cell differentiation and interaction with HES1 or RUNX1. Post-translationally, ubiquitinated by XIAP/BIRC4. As to expression, in all tissues examined, mostly in brain, liver and muscle.

It localises to the nucleus. Functionally, transcriptional corepressor that binds to a number of transcription factors. Inhibits NF-kappa-B-regulated gene expression. Inhibits the transcriptional activation mediated by FOXA2, and by CTNNB1 and TCF family members in Wnt signaling. Enhances FOXG1/BF-1- and HES1-mediated transcriptional repression. The effects of full-length TLE family members may be modulated by association with dominant-negative AES. Unusual function as coactivator for ESRRG. In Homo sapiens (Human), this protein is Transducin-like enhancer protein 1 (TLE1).